The chain runs to 75 residues: UPF0270 protein PP_1747 (75 aa).

Belongs to the UPF0270 family.

The polypeptide is UPF0270 protein PP_1747 (Pseudomonas putida (strain ATCC 47054 / DSM 6125 / CFBP 8728 / NCIMB 11950 / KT2440)).